The chain runs to 1063 residues: Structural polyprotein (1063 aa).

Residues 1-131 (MASTTPITME…LGPPTNPFQA (131 aa)) form a disordered region. Residues 30–69 (GASQSRRPRPPRQRDSSTSGDDSGRDSGGPRRRRGNRGRG) form a human C1QBP/SF2P32-binding region. Phosphoserine; by host is present on serine 46. Basic residues predominate over residues 59–69 (PRRRRGNRGRG). Residues 93–107 (APKPSRAPPQQPQPP) show a composition bias toward pro residues. Cysteine 153 and cysteine 197 are disulfide-bonded. Positions 279 to 300 (GAPQAFLAGLLLAAVAVGTARA) are functions as E2 signal peptide. Over 301 to 534 (GLQPRADMAA…LWLATANALS (234 aa)) the chain is Extracellular. The segment at 305–347 (RADMAAPPAPPQPPCAHGQHYGHHHHQLPFLGHDGHHGGTLRV) is disordered. N-linked (GlcNAc...) asparagine; by host glycans are attached at residues asparagine 353, asparagine 371, asparagine 410, and asparagine 429. Residues 535-555 (LDHALAAFVLLFPWVLIFMVC) traverse the membrane as a helical segment. At 556 to 582 (RRACRRRGAAAALTAVVLQGYNPPAYG) the chain is on the cytoplasmic side. The functions as E1 signal peptide stretch occupies residues 563–582 (GAAAALTAVVLQGYNPPAYG). Residues 583-1028 (EEAFTYLCTA…QTWAEWAAAH (446 aa)) lie on the Extracellular side of the membrane. 8 cysteine pairs are disulfide-bonded: cysteine 590–cysteine 595, cysteine 619–cysteine 824, cysteine 641–cysteine 653, cysteine 699–cysteine 712, cysteine 758–cysteine 767, cysteine 807–cysteine 817, cysteine 931–cysteine 934, and cysteine 950–cysteine 983. The N-linked (GlcNAc...) asparagine; by host glycan is linked to asparagine 658. Ca(2+)-binding residues include asparagine 670 and alanine 671. 2 residues coordinate Ca(2+): aspartate 718 and threonine 719. Asparagine 759 and asparagine 791 each carry an N-linked (GlcNAc...) asparagine; by host glycan. Threonine 1011 and threonine 1012 each carry an O-linked (GalNAc...) threonine; by host glycan. Residues 1029-1049 (WWQLTLGAVCALLLAGLLACC) form a helical membrane-spanning segment. At 1050–1063 (AKCLYYLRGAIAPR) the chain is on the extracellular side.

In terms of assembly, homodimer; further assembles into homooligomer. Interacts with human C1QBP. Interacts (via N-terminus) with protease/methyltransferase p150. Heterodimer with spike glycoprotein E2. As to quaternary structure, heterodimer with spike glycoprotein E1. Structural polyprotein: Specific enzymatic cleavages in vivo yield mature proteins. Two signal peptidase-mediated cleavages within the polyprotein produce the structural proteins capsid, E2, and E1. The E2 signal peptide remains attached to the C-terminus of the capsid protein after cleavage by the signal peptidase. Another signal peptide at E2 C-terminus directs E1 to the ER, with a similar mechanism. In terms of processing, contains three N-linked oligosaccharides. Post-translationally, capsid is phosphorylated on Ser-46 by host. This phosphorylation negatively regulates capsid protein RNA-binding activity. Dephosphorylated by human PP1A.

The protein localises to the virion. It localises to the host cytoplasm. Its subcellular location is the host mitochondrion. The protein resides in the virion membrane. It is found in the host Golgi apparatus membrane. Functionally, capsid protein interacts with genomic RNA and assembles into icosahedric core particles 65-70 nm in diameter. The resulting nucleocapsid eventually associates with the cytoplasmic domain of E2 at the cell membrane, leading to budding and formation of mature virions from host Golgi membranes. Phosphorylation negatively regulates RNA-binding activity, possibly delaying virion assembly during the viral replication phase. Capsid protein dimerizes and becomes disulfide-linked in the virion. Modulates genomic RNA replication. Modulates subgenomic RNA synthesis by interacting with human C1QBP/SF2P32. Induces both perinuclear clustering of mitochondria and the formation of electron-dense intermitochondrial plaques, both hallmarks of rubella virus infected cells. Induces apoptosis when expressed in transfected cells. In terms of biological role, responsible for viral attachment to target host cell, by binding to the cell receptor. Its transport to the plasma membrane depends on interaction with E1 protein. The surface glycoproteins display an irregular helical organization and a pseudo-tetrameric inner nucleocapsid arrangement. Its function is as follows. Class II viral fusion protein. Fusion activity is inactive as long as E1 is bound to E2 in mature virion. After virus attachment to target cell and clathrin-mediated endocytosis, acidification of the endosome would induce dissociation of E1/E2 heterodimer and concomitant trimerization of the E1 subunits. This E1 homotrimer is fusion active, and promotes release of viral nucleocapsid in cytoplasm after endosome and viral membrane fusion. The cytoplasmic tail of spike glycoprotein E1 modulates virus release. The surface glycoproteins display an irregular helical organization and a pseudo-tetrameric inner nucleocapsid arrangement. The sequence is that of Structural polyprotein from Rubella virus (strain RN-UK86) (RUBV).